Reading from the N-terminus, the 93-residue chain is Protein translocase subunit SecE (93 aa).

A disordered region spans residues 1–33 (MTDALGSIDMPDAEDETREKKARKGGKRGKKGP). The segment covering 20 to 33 (KKARKGGKRGKKGP) has biased composition (basic residues). Residues 64–84 (TVVIVFVVIMIGLVTVIDFGF) form a helical membrane-spanning segment.

This sequence belongs to the SecE/SEC61-gamma family. As to quaternary structure, component of the Sec protein translocase complex. Heterotrimer consisting of SecY, SecE and SecG subunits. The heterotrimers can form oligomers, although 1 heterotrimer is thought to be able to translocate proteins. Interacts with the ribosome. Interacts with SecDF, and other proteins may be involved. Interacts with SecA.

It localises to the cell membrane. Essential subunit of the Sec protein translocation channel SecYEG. Clamps together the 2 halves of SecY. May contact the channel plug during translocation. In Streptomyces virginiae (Streptomyces cinnamonensis), this protein is Protein translocase subunit SecE.